The primary structure comprises 528 residues: GMP synthase [glutamine-hydrolyzing] (528 aa).

In terms of domain architecture, Glutamine amidotransferase type-1 spans Ala-13 to Asp-204. Cys-90 (nucleophile) is an active-site residue. Catalysis depends on residues His-178 and Glu-180. In terms of domain architecture, GMPS ATP-PPase spans Trp-205–Arg-403. Ser-232–Ser-238 contributes to the ATP binding site.

Homodimer.

The enzyme catalyses XMP + L-glutamine + ATP + H2O = GMP + L-glutamate + AMP + diphosphate + 2 H(+). The protein operates within purine metabolism; GMP biosynthesis; GMP from XMP (L-Gln route): step 1/1. Catalyzes the synthesis of GMP from XMP. The chain is GMP synthase [glutamine-hydrolyzing] from Prochlorococcus marinus (strain MIT 9303).